The primary structure comprises 912 residues: Metabotropic glutamate receptor 4 (912 aa).

An N-terminal signal peptide occupies residues 1–32; the sequence is MSGKGGWAWWWARLPLCLLLSLYAPWVPSSLG. Residues 33-587 are Extracellular-facing; it reads KPKGHPHMNS…IVKLEWDSPW (555 aa). Cysteines 67 and 109 form a disulfide. N-linked (GlcNAc...) asparagine glycosylation occurs at N98. L-glutamate contacts are provided by residues S159, 180–182, and Y230; that span reads AST. Disulfide bonds link C249–C538, C372–C388, C428–C435, C520–C539, C524–C542, C545–C557, and C560–C573. N-linked (GlcNAc...) asparagine glycosylation occurs at N301. D312 contributes to the L-glutamate binding site. K405 contributes to the L-glutamate binding site. N-linked (GlcNAc...) asparagine glycosylation is found at N454 and N484. N569 carries an N-linked (GlcNAc...) asparagine glycan. Residues 588–610 form a helical membrane-spanning segment; it reads AVLPLFLAVVGIAATLFVVVTFV. The Cytoplasmic segment spans residues 611–624; sequence RYNDTPIVKASGRE. Residues 625–645 traverse the membrane as a helical segment; the sequence is LSYVLLAGIFLCYATTFLMIA. Topologically, residues 646-656 are extracellular; the sequence is EPDLGTCSLRR. Residues 657–675 form a helical membrane-spanning segment; that stretch reads IFLGLGMSISYAALLTKTN. Residues 676–699 are Cytoplasmic-facing; sequence RIYRIFEQGKRSVSAPRFISPASQ. A helical transmembrane segment spans residues 700-720; sequence LAITFILISLQLLGICVWFVV. At 721–750 the chain is on the extracellular side; the sequence is DPSHSVVDFQDQRTLDPRFARGVLKCDISD. Residues 751 to 772 form a helical membrane-spanning segment; sequence LSLICLLGYSMLLMVTCTVYAI. The Cytoplasmic portion of the chain corresponds to 773–785; that stretch reads KTRGVPETFNEAK. A helical membrane pass occupies residues 786–808; it reads PIGFTMYTTCIVWLAFIPIFFGT. Residues 809–821 lie on the Extracellular side of the membrane; it reads SQSADKLYIQTTT. Residues 822–847 form a helical membrane-spanning segment; it reads LTVSVSLSASVSLGMLYMPKVYIILF. Residues 848–912 lie on the Cytoplasmic side of the membrane; that stretch reads HPEQNVPKRK…TYVTYTNHAI (65 aa).

The protein belongs to the G-protein coupled receptor 3 family. As to quaternary structure, interacts with PICK1. In terms of tissue distribution, is widely distributed in the CNS. Predominant expression is seen in the granule cells of the cerebellum.

It is found in the cell membrane. Its function is as follows. G-protein coupled receptor for glutamate. Ligand binding causes a conformation change that triggers signaling via guanine nucleotide-binding proteins (G proteins) and modulates the activity of down-stream effectors. Signaling inhibits adenylate cyclase activity. This is Metabotropic glutamate receptor 4 (Grm4) from Rattus norvegicus (Rat).